Consider the following 202-residue polypeptide: MLKFLKQVGDYAKESLQAAKAIGQGLGVTFDHMQRRPVTVQYPYEKLIPSERYRGRIHYEFDKCIACEVCVRVCPINLPVVDWVYNKETKKKDLKNYSIDFGACIFCGNCVEYCPTNCLSMTEEYELATYDRHELNYDNVALGRLPYKVTDDPMVTPFREFAYLPKGEYDPHVVPSDRPRAGQRPEELVDQYKQAAAANEEN.

4Fe-4S ferredoxin-type domains follow at residues 55-84 and 95-124; these read GRIH…VDWV and KNYS…MTEE. Residues cysteine 64, cysteine 67, cysteine 70, cysteine 74, cysteine 104, cysteine 107, cysteine 110, and cysteine 114 each contribute to the [4Fe-4S] cluster site. Residues 168–187 show a composition bias toward basic and acidic residues; the sequence is EYDPHVVPSDRPRAGQRPEE. The segment at 168 to 202 is disordered; the sequence is EYDPHVVPSDRPRAGQRPEELVDQYKQAAAANEEN.

Belongs to the complex I 23 kDa subunit family. In terms of assembly, NDH-1 is composed of at least 11 different subunits. [4Fe-4S] cluster is required as a cofactor.

The protein localises to the cellular thylakoid membrane. It catalyses the reaction a plastoquinone + NADH + (n+1) H(+)(in) = a plastoquinol + NAD(+) + n H(+)(out). It carries out the reaction a plastoquinone + NADPH + (n+1) H(+)(in) = a plastoquinol + NADP(+) + n H(+)(out). Its function is as follows. NDH-1 shuttles electrons from an unknown electron donor, via FMN and iron-sulfur (Fe-S) centers, to quinones in the respiratory and/or the photosynthetic chain. The immediate electron acceptor for the enzyme in this species is believed to be plastoquinone. Couples the redox reaction to proton translocation, and thus conserves the redox energy in a proton gradient. The sequence is that of NAD(P)H-quinone oxidoreductase subunit I from Synechococcus elongatus (strain ATCC 33912 / PCC 7942 / FACHB-805) (Anacystis nidulans R2).